The chain runs to 933 residues: Isoleucine--tRNA ligase (933 aa).

A 'HIGH' region motif is present at residues 57-67 (PYANGNIHVGH). Residue E554 coordinates L-isoleucyl-5'-AMP. The 'KMSKS' region signature appears at 595–599 (KMSKS). ATP is bound at residue K598.

It belongs to the class-I aminoacyl-tRNA synthetase family. IleS type 1 subfamily. As to quaternary structure, monomer.

It is found in the cytoplasm. It carries out the reaction tRNA(Ile) + L-isoleucine + ATP = L-isoleucyl-tRNA(Ile) + AMP + diphosphate. Functionally, catalyzes the attachment of isoleucine to tRNA(Ile). As IleRS can inadvertently accommodate and process structurally similar amino acids such as valine, to avoid such errors it has two additional distinct tRNA(Ile)-dependent editing activities. One activity is designated as 'pretransfer' editing and involves the hydrolysis of activated Val-AMP. The other activity is designated 'posttransfer' editing and involves deacylation of mischarged Val-tRNA(Ile). This Streptococcus pyogenes serotype M1 protein is Isoleucine--tRNA ligase.